The following is a 275-amino-acid chain: Phosphate import ATP-binding protein PstB (275 aa).

Positions 29–270 (VSVRDLNFYY…PTDRRTQDYI (242 aa)) constitute an ABC transporter domain. Residue 61-68 (GPSGCGKS) participates in ATP binding.

The protein belongs to the ABC transporter superfamily. Phosphate importer (TC 3.A.1.7) family. In terms of assembly, the complex is composed of two ATP-binding proteins (PstB), two transmembrane proteins (PstC and PstA) and a solute-binding protein (PstS).

It is found in the cell inner membrane. The enzyme catalyses phosphate(out) + ATP + H2O = ADP + 2 phosphate(in) + H(+). In terms of biological role, part of the ABC transporter complex PstSACB involved in phosphate import. Responsible for energy coupling to the transport system. The sequence is that of Phosphate import ATP-binding protein PstB from Rhodopseudomonas palustris (strain BisB18).